The sequence spans 518 residues: Glutamate--cysteine ligase (518 aa).

This sequence belongs to the glutamate--cysteine ligase type 1 family. Type 1 subfamily.

The enzyme catalyses L-cysteine + L-glutamate + ATP = gamma-L-glutamyl-L-cysteine + ADP + phosphate + H(+). It functions in the pathway sulfur metabolism; glutathione biosynthesis; glutathione from L-cysteine and L-glutamate: step 1/2. This Salmonella agona (strain SL483) protein is Glutamate--cysteine ligase.